We begin with the raw amino-acid sequence, 270 residues long: Tryptophan synthase alpha chain (270 aa).

Residues glutamate 49 and aspartate 60 each act as proton acceptor in the active site.

Belongs to the TrpA family. As to quaternary structure, tetramer of two alpha and two beta chains.

It catalyses the reaction (1S,2R)-1-C-(indol-3-yl)glycerol 3-phosphate + L-serine = D-glyceraldehyde 3-phosphate + L-tryptophan + H2O. It participates in amino-acid biosynthesis; L-tryptophan biosynthesis; L-tryptophan from chorismate: step 5/5. Functionally, the alpha subunit is responsible for the aldol cleavage of indoleglycerol phosphate to indole and glyceraldehyde 3-phosphate. The protein is Tryptophan synthase alpha chain of Buchnera aphidicola subsp. Melaphis rhois.